The sequence spans 169 residues: E1B protein, small T-antigen (169 aa).

Belongs to the adenoviridae E1B 19 kDa protein family.

This chain is E1B protein, small T-antigen, found in Canis lupus familiaris (Dog).